A 310-amino-acid chain; its full sequence is Pyrimidine-specific ribonucleoside hydrolase RihA (310 aa).

Residue His240 is part of the active site.

The protein belongs to the IUNH family. RihA subfamily.

In terms of biological role, hydrolyzes cytidine or uridine to ribose and cytosine or uracil, respectively. The polypeptide is Pyrimidine-specific ribonucleoside hydrolase RihA (Photobacterium profundum (strain SS9)).